The primary structure comprises 442 residues: MGQPSIDLPSRLLRNLKPWLGASHWRIAFSGGLDSTVLLHLLAKLAKNQSIPALSAIHVHHGLQAAADAWPAHCQAVCEELAVPLQVQRVQVQPGASVERAARDARYAAFSAATQANDVLLTGQHRDDQAETLLFRLLRGAGVRGLSGMPATRALGQGSLVRPLLDVTRAELEAYARDHGLRWIEDPSNQDRQFSRNYLRHQIMPLLIGRWPQAHASMARSAAHLREAQGLLDELAQIDLTQASLPSEFEWSGLPSLEFAAIAKLSDARQRNALSHWLEPLTRLPDTDHWSGWVDVRDAGNDASPIWRLADGELHRSAGRLWWLSGEWLRTPVVSGDWHDLSSALRLPDNGRVMFSGQTPVGPLHIRYRQGGEVMDLAGRGHRDLKRLLNERAVPGFVRGRLPLLFRGEELLAVANLPGLDGNALEGWRLHWQPSDEDQGLR.

30–35 (SGGLDS) is a binding site for ATP.

The protein belongs to the tRNA(Ile)-lysidine synthase family.

Its subcellular location is the cytoplasm. The catalysed reaction is cytidine(34) in tRNA(Ile2) + L-lysine + ATP = lysidine(34) in tRNA(Ile2) + AMP + diphosphate + H(+). Ligates lysine onto the cytidine present at position 34 of the AUA codon-specific tRNA(Ile) that contains the anticodon CAU, in an ATP-dependent manner. Cytidine is converted to lysidine, thus changing the amino acid specificity of the tRNA from methionine to isoleucine. The sequence is that of tRNA(Ile)-lysidine synthase from Pseudomonas fluorescens (strain Pf0-1).